A 195-amino-acid chain; its full sequence is Probable serine/threonine-protein kinase BUD32 homolog (195 aa).

Residues 1–195 (MKVYLGGEAE…GRYVERVSMG (195 aa)) form the Protein kinase domain. ATP is bound at residue K12. The active-site Proton acceptor is the D107.

Belongs to the protein kinase superfamily. Tyr protein kinase family. BUD32 subfamily.

Its subcellular location is the cytoplasm. The enzyme catalyses L-seryl-[protein] + ATP = O-phospho-L-seryl-[protein] + ADP + H(+). It catalyses the reaction L-threonyl-[protein] + ATP = O-phospho-L-threonyl-[protein] + ADP + H(+). Functionally, could be involved in the formation of a threonylcarbamoyl group on adenosine at position 37 (t(6)A37) in tRNAs that read codons beginning with adenine. In Archaeoglobus fulgidus (strain ATCC 49558 / DSM 4304 / JCM 9628 / NBRC 100126 / VC-16), this protein is Probable serine/threonine-protein kinase BUD32 homolog.